The chain runs to 222 residues: Chalcone--flavanone isomerase 1 (222 aa).

3 residues coordinate substrate: T48, N113, and T190.

It belongs to the chalcone isomerase family.

The enzyme catalyses a chalcone = a flavanone.. The protein operates within secondary metabolite biosynthesis; flavonoid biosynthesis. In terms of biological role, catalyzes the intramolecular cyclization of bicyclic chalcones into tricyclic (S)-flavanones. Responsible for the isomerization of 4,2',4',6'-tetrahydroxychalcone (also termed chalcone) into naringenin. The chain is Chalcone--flavanone isomerase 1 (CHI1) from Medicago sativa (Alfalfa).